Here is a 163-residue protein sequence, read N- to C-terminus: Neurotrophin-3 (163 aa).

Residues 1 to 3 (IQS) form the signal peptide. The propeptide occupies 4–119 (TSMDQGILTE…VLNRTSRRKR (116 aa)). A disordered region spans residues 35–61 (KQTARTKDGTQTTVKKSEAEADATASQ). N-linked (GlcNAc...) asparagine glycosylation is present at N112.

The protein belongs to the NGF-beta family.

It localises to the secreted. Its function is as follows. Seems to promote the survival of visceral and proprioceptive sensory neurons. This is Neurotrophin-3 (NTF3) from Corallus caninus (Emerald tree boa).